A 320-amino-acid chain; its full sequence is D-alanine--D-alanine ligase (320 aa).

An ATP-grasp domain is found at 101–317 (KMIFQGAGLP…FSELVCKILS (217 aa)). 148–203 (INQLGLPLIVKPSREGSSFGMTKVEHLDQLDDALKKAWHYDEEILVEKWHFGTELT) is an ATP binding site. The Mg(2+) site is built by Asp271, Glu284, and Asn286.

It belongs to the D-alanine--D-alanine ligase family. Requires Mg(2+) as cofactor. Mn(2+) is required as a cofactor.

The protein resides in the cytoplasm. The catalysed reaction is 2 D-alanine + ATP = D-alanyl-D-alanine + ADP + phosphate + H(+). It participates in cell wall biogenesis; peptidoglycan biosynthesis. Cell wall formation. The chain is D-alanine--D-alanine ligase from Hamiltonella defensa subsp. Acyrthosiphon pisum (strain 5AT).